The chain runs to 527 residues: Peptide chain release factor 3 (527 aa).

Residues 9–277 (AKRRTFAIIS…AVVDWAPRPL (269 aa)) form the tr-type G domain. GTP contacts are provided by residues 18-25 (SHPDAGKT), 86-90 (DTPGH), and 140-143 (NKLD).

Belongs to the TRAFAC class translation factor GTPase superfamily. Classic translation factor GTPase family. PrfC subfamily.

The protein localises to the cytoplasm. In terms of biological role, increases the formation of ribosomal termination complexes and stimulates activities of RF-1 and RF-2. It binds guanine nucleotides and has strong preference for UGA stop codons. It may interact directly with the ribosome. The stimulation of RF-1 and RF-2 is significantly reduced by GTP and GDP, but not by GMP. In Pseudomonas putida (strain W619), this protein is Peptide chain release factor 3.